A 952-amino-acid polypeptide reads, in one-letter code: MASLLARHTKMPVVTVEDEMELAADTVFLIPPATIMTLEGRHLRLAPKDRRVLSLPIDAFFTSMAAGFGSRAVAVVLSGTGSDGTRGVGAVHAAGGVAIAQDPRDARFDGMPRSAIATGFIDSALGIERIGPWIADYLIRRPRLGQLTGAERPDGATGVAVDDDRVAVGQFDGLEPAEALGRIVEILSLSGEVNFLDYKPGTVQRRIERRMGVRQVPDLTSYLELLTHDRTELASLRREMLIPVTSFFRDPDSFAELAEKVIDPLVAQAAVGSTLRVWTAGCATGEEAYTLAMLFFDAFERAGRWPTLKIFATDVEPMNIETAAAGFFAETIAADLPTTFLERFFTTRGGQYTIRPEIRQTIVFARHNLLSDPPFTRMDLVTCRNTLIYFRPEAQERALRRMHYAVRTGGYLFLGGSEALVQVQDDFSVLSARHRIWQALRPGAAPLTDRRAGLYVTPRPPATRRDNAPVTAVERGFATLSRTYAPPPALLVNSHHEILHSYGEVSRFMQMREGAASLEIGRMLVEPLLPVASALLFKSARLGEEAASDSIPIAEGILGPDPMRLRLRVVPVKQGTDSDEGRLYILAFEPDEGPDDGISGIDIDREVGARIEMLEAELAMTRESLQAMIEELETSNEELQATNEEMMASNEELQSANEELQSVNEELNSLNAEYQEKIDLLNRSNADLDSLTEIMAMSTIFVDSELTVTRFSPDAAELFRIRDVDVGRPLGDLTHRLDYPALLDDLRRTLQGQSRTEREVSGLNGRHYLVRMLPYRVPSSAAQGAVVTFVDITQTRNLQLLQAVIDGLAEHVAVLDGHGDILLVNAAWTRFAADNGDPGLAHTGVGTNYVGRCDIGEAAIDSGYAKRAVEGIRSVLTGKQRHFTMEYPCDAPGQPRWFVMHARPLDGARGGAVVSHIEITRWHNQTEASPETSSGGLPGSDGTGADGGAPRA.

The CheB-type methylesterase domain occupies 1–141 (MASLLARHTK…PWIADYLIRR (141 aa)). One can recognise a CheR-type methyltransferase domain in the interval 168-440 (VGQFDGLEPA…SARHRIWQAL (273 aa)). Residues 923-935 (HNQTEASPETSSG) are compositionally biased toward polar residues. The tract at residues 923–952 (HNQTEASPETSSGGLPGSDGTGADGGAPRA) is disordered. Positions 936–952 (GLPGSDGTGADGGAPRA) are enriched in gly residues.

This is an uncharacterized protein from Rhodobacter capsulatus (Rhodopseudomonas capsulata).